A 496-amino-acid chain; its full sequence is MDLLYIVAALVIFASLLIAKSKRKPKKNLPPGPPRLPIIGNLHQLGEKPHRAMVELSKTYGPLMSLKLGSVTTVVATSVETVRDVLKTYDLECCSRPYMTYPARITYNLKDLVFSPYDKYWRQVRKLTVVELYTAKRVQSFRHIREEEVASFVRFNKQAASSEETVNLSQKILKMSGSVICRIGFGINLEGSKLENTYQEIIVQAFEVLGSLAAVDYFPVIGTIIDRITGLHAKCEKVFHGIDSFFDQAIQRHIDDPSIKDDIIDLLLKMERGEGSLGEYELTREHTKGILMNILTAGIDTSAQTMTWAMTHLLANPRVMKKLQAEIREKIKNIDEITDDDVEQLDYFKLVLKETFRISPIVPVLVPRVAAKDLKIAGYDVPEKTWIHVNMWAVHMSPSIWKDPETFNPERFIDNQTDFKGLNFELLPFGSGRRMCPGMGMGLAVVHLTLINLLYRFDWKLPNGMKAEELSIEENYGLICVKKLPLEAIPVLTQWT.

C436 serves as a coordination point for heme.

Belongs to the cytochrome P450 family. Heme is required as a cofactor.

In Thlaspi arvense (Field penny-cress), this protein is Cytochrome P450 71B1 (CYP71B1).